Reading from the N-terminus, the 336-residue chain is Inositol 2-dehydrogenase (336 aa).

Belongs to the Gfo/Idh/MocA family. Homotetramer.

It carries out the reaction myo-inositol + NAD(+) = scyllo-inosose + NADH + H(+). Its function is as follows. Involved in the oxidation of myo-inositol (MI) to 2-keto-myo-inositol (2KMI or 2-inosose). The polypeptide is Inositol 2-dehydrogenase (Pseudomonas fluorescens (strain ATCC BAA-477 / NRRL B-23932 / Pf-5)).